Here is a 515-residue protein sequence, read N- to C-terminus: 1-pyrroline-5-carboxylate dehydrogenase (515 aa).

Catalysis depends on residues Glu-286 and Cys-320.

Belongs to the aldehyde dehydrogenase family. RocA subfamily.

It carries out the reaction L-glutamate 5-semialdehyde + NAD(+) + H2O = L-glutamate + NADH + 2 H(+). It functions in the pathway amino-acid degradation; L-proline degradation into L-glutamate; L-glutamate from L-proline: step 2/2. The chain is 1-pyrroline-5-carboxylate dehydrogenase from Geobacillus sp. (strain WCH70).